Consider the following 269-residue polypeptide: Ubiquinone/menaquinone biosynthesis C-methyltransferase UbiE (269 aa).

S-adenosyl-L-methionine-binding positions include T92, D113, and 141–142 (NA).

Belongs to the class I-like SAM-binding methyltransferase superfamily. MenG/UbiE family.

It carries out the reaction a 2-demethylmenaquinol + S-adenosyl-L-methionine = a menaquinol + S-adenosyl-L-homocysteine + H(+). The enzyme catalyses a 2-methoxy-6-(all-trans-polyprenyl)benzene-1,4-diol + S-adenosyl-L-methionine = a 5-methoxy-2-methyl-3-(all-trans-polyprenyl)benzene-1,4-diol + S-adenosyl-L-homocysteine + H(+). It functions in the pathway quinol/quinone metabolism; menaquinone biosynthesis; menaquinol from 1,4-dihydroxy-2-naphthoate: step 2/2. It participates in cofactor biosynthesis; ubiquinone biosynthesis. In terms of biological role, methyltransferase required for the conversion of demethylmenaquinol (DMKH2) to menaquinol (MKH2) and the conversion of 2-polyprenyl-6-methoxy-1,4-benzoquinol (DDMQH2) to 2-polyprenyl-3-methyl-6-methoxy-1,4-benzoquinol (DMQH2). This Brucella suis biovar 1 (strain 1330) protein is Ubiquinone/menaquinone biosynthesis C-methyltransferase UbiE.